Consider the following 364-residue polypeptide: UDP-N-acetylglucosamine--N-acetylmuramyl-(pentapeptide) pyrophosphoryl-undecaprenol N-acetylglucosamine transferase (364 aa).

Residues 10–12 (TGG), Asn124, Arg166, Ser196, Ile252, and Gln297 each bind UDP-N-acetyl-alpha-D-glucosamine.

The protein belongs to the glycosyltransferase 28 family. MurG subfamily.

It is found in the cell membrane. The enzyme catalyses di-trans,octa-cis-undecaprenyl diphospho-N-acetyl-alpha-D-muramoyl-L-alanyl-D-glutamyl-meso-2,6-diaminopimeloyl-D-alanyl-D-alanine + UDP-N-acetyl-alpha-D-glucosamine = di-trans,octa-cis-undecaprenyl diphospho-[N-acetyl-alpha-D-glucosaminyl-(1-&gt;4)]-N-acetyl-alpha-D-muramoyl-L-alanyl-D-glutamyl-meso-2,6-diaminopimeloyl-D-alanyl-D-alanine + UDP + H(+). Its pathway is cell wall biogenesis; peptidoglycan biosynthesis. In terms of biological role, cell wall formation. Catalyzes the transfer of a GlcNAc subunit on undecaprenyl-pyrophosphoryl-MurNAc-pentapeptide (lipid intermediate I) to form undecaprenyl-pyrophosphoryl-MurNAc-(pentapeptide)GlcNAc (lipid intermediate II). The polypeptide is UDP-N-acetylglucosamine--N-acetylmuramyl-(pentapeptide) pyrophosphoryl-undecaprenol N-acetylglucosamine transferase (Ruminiclostridium cellulolyticum (strain ATCC 35319 / DSM 5812 / JCM 6584 / H10) (Clostridium cellulolyticum)).